Consider the following 261-residue polypeptide: Probable 6-phosphogluconolactonase 4 (261 aa).

This sequence belongs to the glucosamine/galactosamine-6-phosphate isomerase family. 6-phosphogluconolactonase subfamily.

It is found in the cytoplasm. The protein localises to the cytosol. The catalysed reaction is 6-phospho-D-glucono-1,5-lactone + H2O = 6-phospho-D-gluconate + H(+). The protein operates within carbohydrate degradation; pentose phosphate pathway; D-ribulose 5-phosphate from D-glucose 6-phosphate (oxidative stage): step 2/3. In terms of biological role, catalyzes the hydrolysis of 6-phosphogluconolactone to 6-phosphogluconate. This is Probable 6-phosphogluconolactonase 4 from Arabidopsis thaliana (Mouse-ear cress).